The primary structure comprises 60 residues: Large ribosomal subunit protein uL30 (60 aa).

Belongs to the universal ribosomal protein uL30 family. As to quaternary structure, part of the 50S ribosomal subunit.

The polypeptide is Large ribosomal subunit protein uL30 (Amoebophilus asiaticus (strain 5a2)).